The following is a 220-amino-acid chain: Endonuclease NucS (220 aa).

Belongs to the NucS endonuclease family.

The protein resides in the cytoplasm. In terms of biological role, cleaves both 3' and 5' ssDNA extremities of branched DNA structures. The sequence is that of Endonuclease NucS from Mycobacterium leprae (strain TN).